Consider the following 636-residue polypeptide: DNA mismatch repair protein MutL (636 aa).

The disordered stretch occupies residues 362–393 (RKTPEVHEEAEKPEFLVKQEAKNSEEPKNETE). The span at 363 to 393 (KTPEVHEEAEKPEFLVKQEAKNSEEPKNETE) shows a compositional bias: basic and acidic residues.

This sequence belongs to the DNA mismatch repair MutL/HexB family.

Functionally, this protein is involved in the repair of mismatches in DNA. It is required for dam-dependent methyl-directed DNA mismatch repair. May act as a 'molecular matchmaker', a protein that promotes the formation of a stable complex between two or more DNA-binding proteins in an ATP-dependent manner without itself being part of a final effector complex. In Lactobacillus helveticus (strain DPC 4571), this protein is DNA mismatch repair protein MutL.